The sequence spans 229 residues: Cytochrome c oxidase assembly factor 7 (229 aa).

5 Sel1-like repeats span residues 34–66 (PEGCHRLADYLEGVKKNYESTAQVLQHNCEVNA), 68–104 (AQSCYKLGAYHVTGKGGMKKCLKTAYSCFLKSCNTQG), 108–145 (VDACHNVGLLAQDGRALETGPDTTVARQYFEKACEGGF), 146–182 (APSCFNLSTLYIQGFPGLDKSMPLALKYALKACDLGH), and 183–218 (VWGCANASRMYKLGDGTDKDEQRAEELKNRAKDLHG). A disordered region spans residues 197 to 229 (DGTDKDEQRAEELKNRAKDLHGQEKERQLKFGE).

This sequence belongs to the hcp beta-lactamase family.

It is found in the mitochondrion intermembrane space. May be required for assembly of mitochondrial respiratory chain complexes. The polypeptide is Cytochrome c oxidase assembly factor 7 (coa7) (Danio rerio (Zebrafish)).